Reading from the N-terminus, the 261-residue chain is Sulfur carrier protein FdhD (261 aa).

C105 serves as the catalytic Cysteine persulfide intermediate. 245–250 contributes to the Mo-bis(molybdopterin guanine dinucleotide) binding site; that stretch reads FIRGDR.

This sequence belongs to the FdhD family.

Its subcellular location is the cytoplasm. Required for formate dehydrogenase (FDH) activity. Acts as a sulfur carrier protein that transfers sulfur from IscS to the molybdenum cofactor prior to its insertion into FDH. In Listeria innocua serovar 6a (strain ATCC BAA-680 / CLIP 11262), this protein is Sulfur carrier protein FdhD.